Here is a 342-residue protein sequence, read N- to C-terminus: Holliday junction branch migration complex subunit RuvB (342 aa).

The segment at 1–179 (MTNILSPEKS…FGIPMRLNFY (179 aa)) is large ATPase domain (RuvB-L). ATP-binding positions include Ile18, Arg19, Gly60, Lys63, Thr64, Thr65, 126 to 128 (EDF), Arg169, Tyr179, and Arg216. Thr64 is a binding site for Mg(2+). Residues 180 to 250 (NTEELKKVLN…ISDFGLKRLE (71 aa)) are small ATPAse domain (RuvB-S). Residues 253–342 (RIGLDSNDYR…HQFNIFNENE (90 aa)) form a head domain (RuvB-H) region. DNA-binding residues include Arg289, Arg308, and Arg313.

Belongs to the RuvB family. As to quaternary structure, homohexamer. Forms an RuvA(8)-RuvB(12)-Holliday junction (HJ) complex. HJ DNA is sandwiched between 2 RuvA tetramers; dsDNA enters through RuvA and exits via RuvB. An RuvB hexamer assembles on each DNA strand where it exits the tetramer. Each RuvB hexamer is contacted by two RuvA subunits (via domain III) on 2 adjacent RuvB subunits; this complex drives branch migration. In the full resolvosome a probable DNA-RuvA(4)-RuvB(12)-RuvC(2) complex forms which resolves the HJ.

Its subcellular location is the cytoplasm. The enzyme catalyses ATP + H2O = ADP + phosphate + H(+). The RuvA-RuvB-RuvC complex processes Holliday junction (HJ) DNA during genetic recombination and DNA repair, while the RuvA-RuvB complex plays an important role in the rescue of blocked DNA replication forks via replication fork reversal (RFR). RuvA specifically binds to HJ cruciform DNA, conferring on it an open structure. The RuvB hexamer acts as an ATP-dependent pump, pulling dsDNA into and through the RuvAB complex. RuvB forms 2 homohexamers on either side of HJ DNA bound by 1 or 2 RuvA tetramers; 4 subunits per hexamer contact DNA at a time. Coordinated motions by a converter formed by DNA-disengaged RuvB subunits stimulates ATP hydrolysis and nucleotide exchange. Immobilization of the converter enables RuvB to convert the ATP-contained energy into a lever motion, pulling 2 nucleotides of DNA out of the RuvA tetramer per ATP hydrolyzed, thus driving DNA branch migration. The RuvB motors rotate together with the DNA substrate, which together with the progressing nucleotide cycle form the mechanistic basis for DNA recombination by continuous HJ branch migration. Branch migration allows RuvC to scan DNA until it finds its consensus sequence, where it cleaves and resolves cruciform DNA. This Rickettsia peacockii (strain Rustic) protein is Holliday junction branch migration complex subunit RuvB.